The primary structure comprises 435 residues: D-amino acid dehydrogenase (435 aa).

Residue V3–W17 coordinates FAD.

This sequence belongs to the DadA oxidoreductase family. The cofactor is FAD.

It carries out the reaction a D-alpha-amino acid + A + H2O = a 2-oxocarboxylate + AH2 + NH4(+). It participates in amino-acid degradation; D-alanine degradation; NH(3) and pyruvate from D-alanine: step 1/1. Oxidative deamination of D-amino acids. This is D-amino acid dehydrogenase from Xylella fastidiosa (strain M23).